The sequence spans 504 residues: Putative glycerol-3-phosphate transporter 2 (504 aa).

12 consecutive transmembrane segments (helical) span residues 31-51 (LSFK…YIAF), 84-104 (ALLG…MFVA), 116-136 (FLTI…VAFW), 145-165 (FLAV…CIVA), 178-198 (MIMG…SLIA), 210-230 (FLGP…FLPV), 280-302 (IPGV…TFLY), 324-344 (GNLS…AGYI), 352-372 (AITA…YRVF), 378-398 (TINV…FALI), 424-444 (AIID…TGYI), and 452-472 (VFYM…KLII).

The protein belongs to the major facilitator superfamily. Organophosphate:Pi antiporter (OPA) (TC 2.A.1.4) family. As to expression, expressed in the root-hair differentiation zone.

The protein localises to the membrane. In Arabidopsis thaliana (Mouse-ear cress), this protein is Putative glycerol-3-phosphate transporter 2.